Here is a 186-residue protein sequence, read N- to C-terminus: Putative 5'(3')-deoxyribonucleotidase (186 aa).

The active-site Nucleophile is the aspartate 6. Residues aspartate 6, aspartate 8, and aspartate 137 each coordinate Mg(2+). The active-site Proton donor is aspartate 8.

This sequence belongs to the 5'(3')-deoxyribonucleotidase family. It depends on Mg(2+) as a cofactor.

Its function is as follows. Dephosphorylates the 5' and 2'(3')-phosphates of deoxyribonucleotides. This chain is Putative 5'(3')-deoxyribonucleotidase, found in Bordetella pertussis (strain Tohama I / ATCC BAA-589 / NCTC 13251).